A 391-amino-acid polypeptide reads, in one-letter code: Phosphoglycerate kinase (391 aa).

Substrate contacts are provided by residues 21–23, arginine 36, 59–62, arginine 113, and arginine 146; these read DFN and HLGR. ATP contacts are provided by residues lysine 197, glutamate 319, and 345-348; that span reads GGDT.

The protein belongs to the phosphoglycerate kinase family. As to quaternary structure, monomer.

Its subcellular location is the cytoplasm. It catalyses the reaction (2R)-3-phosphoglycerate + ATP = (2R)-3-phospho-glyceroyl phosphate + ADP. It functions in the pathway carbohydrate degradation; glycolysis; pyruvate from D-glyceraldehyde 3-phosphate: step 2/5. The sequence is that of Phosphoglycerate kinase from Methylococcus capsulatus (strain ATCC 33009 / NCIMB 11132 / Bath).